Here is a 147-residue protein sequence, read N- to C-terminus: MRSMTLFILFVSIIALLFLLINLVFAPHIPYQEKNSEFECGFHSFHQTRFPFDSPIAAQAICFVILDLEIFTMFPYVGSLGINTFYSLVVILGFMFVVSAGFVFELGKGALKIDSKQNMGGDSTHLELKNLKDISSLNLCPPSAFKN.

The next 3 membrane-spanning stretches (helical) occupy residues 6–26 (LFIL…LVFA), 60–80 (AICF…VGSL), and 84–104 (TFYS…GFVF).

Belongs to the complex I subunit 3 family.

The protein localises to the mitochondrion membrane. The catalysed reaction is a ubiquinone + NADH + 5 H(+)(in) = a ubiquinol + NAD(+) + 4 H(+)(out). Its function is as follows. Core subunit of the mitochondrial membrane respiratory chain NADH dehydrogenase (Complex I) that is believed to belong to the minimal assembly required for catalysis. Complex I functions in the transfer of electrons from NADH to the respiratory chain. The immediate electron acceptor for the enzyme is believed to be ubiquinone. This is NADH-ubiquinone oxidoreductase chain 3 (ndh-3) from Neurospora crassa (strain ATCC 24698 / 74-OR23-1A / CBS 708.71 / DSM 1257 / FGSC 987).